Reading from the N-terminus, the 116-residue chain is Signal recognition particle 14 kDa protein (116 aa).

This sequence belongs to the SRP14 family. In terms of assembly, heterodimer with ZK512.4/SRP9; binds RNA as heterodimer. Component of a signal recognition particle (SRP) complex that consists of a 7SL RNA molecule of 300 nucleotides and six protein subunits: srpa-72, srpa-68, SRP54, F37F2.2/SRP19, F25G6.8/SRP14 and ZK512.4/SRP9.

The protein resides in the cytoplasm. Functionally, component of the signal recognition particle (SRP) complex, a ribonucleoprotein complex that mediates the cotranslational targeting of secretory and membrane proteins to the endoplasmic reticulum (ER). F37F2.2/srpa-19 together with F25G6.8/srpa-14 and the Alu portion of the SRP RNA, constitutes the elongation arrest domain of SRP. The complex of F37F2.2/srpa-19 and F25G6.8/srpa-14 is required for SRP RNA binding. The polypeptide is Signal recognition particle 14 kDa protein (Caenorhabditis elegans).